Consider the following 482-residue polypeptide: Protein translocase subunit SecY (482 aa).

Positions 1–22 (MVIKKPANKVDKKSTFKSSNKK) are disordered. 10 helical membrane-spanning segments follow: residues 41 to 61 (ILFT…TVPG), 92 to 112 (FSIL…VQLL), 137 to 157 (LTKI…IFTL), 177 to 197 (AFYY…MLWI), 201 to 221 (ITIK…IIIS), 243 to 263 (IFFS…LVIL), 303 to 323 (VIPV…SQII), 342 to 362 (FNTW…TFLY), 405 to 425 (VVGS…SKLT), and 426 to 446 (QLPS…SVAI).

The protein belongs to the SecY/SEC61-alpha family. Component of the Sec protein translocase complex. Heterotrimer consisting of SecY, SecE and SecG subunits. The heterotrimers can form oligomers, although 1 heterotrimer is thought to be able to translocate proteins. Interacts with the ribosome. Interacts with SecDF, and other proteins may be involved. Interacts with SecA.

The protein localises to the cell membrane. In terms of biological role, the central subunit of the protein translocation channel SecYEG. Consists of two halves formed by TMs 1-5 and 6-10. These two domains form a lateral gate at the front which open onto the bilayer between TMs 2 and 7, and are clamped together by SecE at the back. The channel is closed by both a pore ring composed of hydrophobic SecY resides and a short helix (helix 2A) on the extracellular side of the membrane which forms a plug. The plug probably moves laterally to allow the channel to open. The ring and the pore may move independently. This Mycoplasma capricolum subsp. capricolum (strain California kid / ATCC 27343 / NCTC 10154) protein is Protein translocase subunit SecY.